A 275-amino-acid chain; its full sequence is MSSHREEKVRRIAAPDIAARKGGTPIVCLTAYTAPVAELLDEHCDLLLVGDSVGMVVHGLPNTVGVTLDMMILHGQAVMRGSRRAMVVVDMPFGSYEGAPETAYDNAARLMKETGAQAVKVESGPTVIDTIQYLVKRGIPVMGHVGLRPQAVLVDGGFKAKGKAGEERRRILEEARATADAGAFAVVVEGVAEGLAREITEAIEVPTIGIGASAGCDGQILVTDDMLGLFDWTPKFVRRYGDLRGEIGKAVAAYAEDVRARRFPGPAEIYFAKAG.

Mg(2+) contacts are provided by D51 and D90. 3-methyl-2-oxobutanoate-binding positions include 51 to 52 (DS), D90, and K120. E122 is a binding site for Mg(2+). Residue E189 is the Proton acceptor of the active site.

Belongs to the PanB family. In terms of assembly, homodecamer; pentamer of dimers. The cofactor is Mg(2+).

The protein resides in the cytoplasm. It catalyses the reaction 3-methyl-2-oxobutanoate + (6R)-5,10-methylene-5,6,7,8-tetrahydrofolate + H2O = 2-dehydropantoate + (6S)-5,6,7,8-tetrahydrofolate. The protein operates within cofactor biosynthesis; (R)-pantothenate biosynthesis; (R)-pantoate from 3-methyl-2-oxobutanoate: step 1/2. Catalyzes the reversible reaction in which hydroxymethyl group from 5,10-methylenetetrahydrofolate is transferred onto alpha-ketoisovalerate to form ketopantoate. The chain is 3-methyl-2-oxobutanoate hydroxymethyltransferase from Phenylobacterium zucineum (strain HLK1).